A 562-amino-acid chain; its full sequence is Arginine--tRNA ligase (562 aa).

Positions 122 to 132 (PNIAKDMHVGH) match the 'HIGH' region motif.

This sequence belongs to the class-I aminoacyl-tRNA synthetase family. In terms of assembly, monomer.

Its subcellular location is the cytoplasm. It carries out the reaction tRNA(Arg) + L-arginine + ATP = L-arginyl-tRNA(Arg) + AMP + diphosphate. The sequence is that of Arginine--tRNA ligase from Chlamydia abortus (strain DSM 27085 / S26/3) (Chlamydophila abortus).